The sequence spans 667 residues: Acetoacetyl-CoA synthetase (667 aa).

Belongs to the ATP-dependent AMP-binding enzyme family.

It is found in the cytoplasm. The protein localises to the cytosol. It carries out the reaction acetoacetate + ATP + CoA = acetoacetyl-CoA + AMP + diphosphate. Functionally, converts acetoacetate to acetoacetyl-CoA in the cytosol. Ketone body-utilizing enzyme, responsible for the synthesis of cholesterol and fatty acids. This chain is Acetoacetyl-CoA synthetase (AACS), found in Gallus gallus (Chicken).